The chain runs to 137 residues: Phosphoribosyl-AMP cyclohydrolase (137 aa).

Asp84 contributes to the Mg(2+) binding site. Cys85 contributes to the Zn(2+) binding site. 2 residues coordinate Mg(2+): Asp86 and Asp88. The Zn(2+) site is built by Cys101 and Cys108.

Belongs to the PRA-CH family. In terms of assembly, homodimer. Mg(2+) serves as cofactor. It depends on Zn(2+) as a cofactor.

It is found in the cytoplasm. It carries out the reaction 1-(5-phospho-beta-D-ribosyl)-5'-AMP + H2O = 1-(5-phospho-beta-D-ribosyl)-5-[(5-phospho-beta-D-ribosylamino)methylideneamino]imidazole-4-carboxamide. It participates in amino-acid biosynthesis; L-histidine biosynthesis; L-histidine from 5-phospho-alpha-D-ribose 1-diphosphate: step 3/9. Its function is as follows. Catalyzes the hydrolysis of the adenine ring of phosphoribosyl-AMP. This Prosthecochloris aestuarii (strain DSM 271 / SK 413) protein is Phosphoribosyl-AMP cyclohydrolase.